The sequence spans 101 residues: Small nuclear ribonucleoprotein Sm D3 (101 aa).

The region spanning isoleucine 6–leucine 78 is the Sm domain.

The protein belongs to the snRNP core protein family. In terms of assembly, component of the Sm core complex, present in spliceosomal snRNP U1, U2, U4/U6 and U5. The core complex contains SMB1, SMD1, SMD2, SMD3, SME1, SMX3 and SMX2 (Sm proteins B, D1, D2, D3, E, F and G, respectively), and is probably a heptameric ring structure. SMD3 specifically interacts with SMB1. Belongs to the CWC complex (or CEF1-associated complex), a spliceosome sub-complex reminiscent of a late-stage spliceosome composed of the U2, U5 and U6 snRNAs and at least BUD13, BUD31, BRR2, CDC40, CEF1, CLF1, CUS1, CWC2, CWC15, CWC21, CWC22, CWC23, CWC24, CWC25, CWC27, ECM2, HSH155, IST3, ISY1, LEA1, MSL1, NTC20, PRP8, PRP9, PRP11, PRP19, PRP21, PRP22, PRP45, PRP46, SLU7, SMB1, SMD1, SMD2, SMD3, SMX2, SMX3, SNT309, SNU114, SPP2, SYF1, SYF2, RSE1 and YJU2. Component of the U4/U6-U5 tri-snRNP complex composed of the U4, U6 and U5 snRNAs and at least PRP3, PRP4, PRP6, PRP8, PRP18, PRP31, PRP38, SNU13, SNU23, SNU66, SNU114, SPP381, SMB1, SMD1, SMD2, SMD3, SMX2, SMX3, LSM2, LSM3, LSM4, LSM5, LSM6, LSM7, LSM8, BRR2 and DIB1.

The protein localises to the cytoplasm. Its subcellular location is the cytosol. It is found in the nucleus. Functionally, plays a role in pre-mRNA splicing as a core component of the spliceosomal U1, U2, U4 and U5 small nuclear ribonucleoproteins (snRNPs), the building blocks of the spliceosome. Also binds telomerase RNA and is required for its accumulation. The protein is Small nuclear ribonucleoprotein Sm D3 (SMD3) of Saccharomyces cerevisiae (strain ATCC 204508 / S288c) (Baker's yeast).